The primary structure comprises 1165 residues: Adhesion G-protein coupled receptor G6 (1165 aa).

A signal peptide spans 1–30; that stretch reads MMFDTLGKRCCPWRLKPSALLFLFVLCVTC. The Extracellular segment spans residues 31–832; it reads VPLSVCGCGS…ASQIDGRNTK (802 aa). Residues C41 and C67 are joined by a disulfide bond. A CUB domain is found at 41-149; the sequence is CRLVLSNPSG…KGFNASYIRV (109 aa). E89 and D97 together coordinate Ca(2+). C94 and C111 are oxidised to a cystine. Residue N121 is glycosylated (N-linked (GlcNAc...) asparagine). Positions 134, 136, and 137 each coordinate Ca(2+). The N-linked (GlcNAc...) asparagine glycan is linked to N143. One can recognise a Pentraxin (PTX) domain in the interval 154 to 356; the sequence is RNQKVILPQT…ALKAEGNLSC (203 aa). Cystine bridges form between C186-C254 and C231-C277. Residues N258, N314, N324, N353, N370, N410, N417, N424, N458, N462, and N478 are each glycosylated (N-linked (GlcNAc...) asparagine). A mediates interaction with laminin-2 region spans residues 446-807; sequence DKRLVLWALL…LDAGETICLC (362 aa). 2 disulfide bridges follow: C498/C533 and C521/C550. Residues N536, N549, N563, N570, N665, N674, N720, N746, N781, and N788 are each glycosylated (N-linked (GlcNAc...) asparagine). The GAIN-B domain maps to 640–823; that stretch reads PHVNIETQNL…GVLMDLPRSA (184 aa). Cystine bridges form between C773–C805 and C792–C807. A GPS region spans residues 773–823; sequence CAFWDMNKNKSFGGWNTSGCVAHSDLDAGETICLCSHFTHFGVLMDLPRSA. A stachel region spans residues 812 to 820; the sequence is HFGVLMDLP. A helical transmembrane segment spans residues 833-853; sequence VLTFITYIGCGISAIFSAATL. The Cytoplasmic segment spans residues 854–873; that stretch reads LTYVAFEKLRRDYPSKILMN. Residues 874–894 form a helical membrane-spanning segment; it reads LSSALLFLNLIFLLDGWVTSF. The Extracellular segment spans residues 895–899; the sequence is GVAGL. A helical membrane pass occupies residues 900 to 920; it reads CTAVAALLHFFLLATFTWMGL. Residues 921–940 lie on the Cytoplasmic side of the membrane; the sequence is EAIHMYIALVKVFNTYIHRY. A helical transmembrane segment spans residues 941 to 961; the sequence is ILKFCIIGWGLPALVVSIILV. The Extracellular portion of the chain corresponds to 962–994; that stretch reads SRRQNEVYGKESYGKDQDDEFCWIQDPVVFYVS. A helical membrane pass occupies residues 995–1015; it reads CAGYFGVMFFLNVAMFIVVMV. At 1016-1039 the chain is on the cytoplasmic side; it reads QICGRNGKRSNRTLREEVLRNLRS. A helical membrane pass occupies residues 1040-1060; it reads VVSLTFLLGMTWGFAFFAWGP. At 1061 to 1062 the chain is on the extracellular side; sequence LN. Residues 1063–1083 form a helical membrane-spanning segment; it reads IPFMYLFSIFNSLQGLFIFIF. Residue N1073 participates in 17alpha-hydroxyprogesterone binding. The Cytoplasmic portion of the chain corresponds to 1084–1165; the sequence is HCAMKENVQK…KRNSHSDNFS (82 aa). Positions 1126 to 1154 are enriched in low complexity; the sequence is NLGKSLSSSSIGSNSTYLTSKSKSSSTTY. The tract at residues 1126–1165 is disordered; that stretch reads NLGKSLSSSSIGSNSTYLTSKSKSSSTTYFKRNSHSDNFS. Phosphoserine is present on residues S1135 and S1138.

Belongs to the G-protein coupled receptor 2 family. Adhesion G-protein coupled receptor (ADGR) subfamily. In terms of assembly, heterodimer of 2 chains generated by proteolytic processing; the large extracellular N-terminal fragment and the membrane-bound C-terminal fragment predominantly remain associated and non-covalently linked. Interacts with Laminin-2; this interaction stabilizes the receptor in an inactive state. Laminin-2 polymerization could facilitate ADGRG6-NTF removal, thereby exposing the tethered agonist to drive myelination. Interacts with PRNP. Interacts with ITGB1. Interacts with LRP1. Post-translationally, proteolytically cleaved into 2 conserved sites: one in the GPS region of the GAIN-B domain (S1 site) and the other in the middle of the extracellular domain (S2 site). The proteolytic cleavage at S1 site generates an extracellular subunit and a seven-transmembrane subunit. Furin is involved in the cleavage of the S2 site generating a soluble fragment. Processing at the GPS region occurred independent of and probably prior to the cleavage at the S2 site. Proteolytic cleavage is required for activation of the receptor. Expressed at high levels in the heart, somite and otic vesicle during embryogenesis and in adult lung.

It localises to the cell membrane. Forms a heterodimer of 2 chains generated by proteolytic processing that remain associated through non-covalent interactions mediated by the GAIN-B domain. In the inactivated receptor, the Stachel sequence (also named stalk) is embedded in the GAIN-B domain, where it adopts a beta-strand conformation. On activation, the Stachel moves into the 7 transmembrane region and adopts a twisted hook-shaped configuration that forms contacts within the receptor, leading to coupling of a G-alpha protein, which activates signaling. The cleaved GAIN-B and N-terminal domains can then dissociate from the rest of the receptor. Its function is as follows. Adhesion G-protein coupled receptor (aGPCR) for steroid hormones, such as progesterone and 17alpha-hydroxyprogesterone (17OHP). Involved in many biological processes, such as myelination, sprouting angiogenesis, placenta, ear and cartilage development. Ligand binding causes a conformation change that triggers signaling via guanine nucleotide-binding proteins (G proteins) and modulates the activity of downstream effectors, such as adenylate cyclase. ADGRG6 is coupled to G(i) G alpha proteins and mediates inhibition of adenylate cyclase. Also able to couple to G(q) G proteins. Involved in myelination of the peripheral nervous system: required for differentiation of promyelinating Schwann cells and for normal myelination of axons. Also acts as a regulator of body length and bone mass. Acts as a regulator of blood-brain barrier formation in the central nervous system vie its association with LRP1 and ITGB1. The protein is Adhesion G-protein coupled receptor G6 of Mus musculus (Mouse).